A 67-amino-acid polypeptide reads, in one-letter code: DNA-directed RNA polymerase subunit omega (67 aa).

The protein belongs to the RNA polymerase subunit omega family. In terms of assembly, the RNAP catalytic core consists of 2 alpha, 1 beta, 1 beta' and 1 omega subunit. When a sigma factor is associated with the core the holoenzyme is formed, which can initiate transcription.

It carries out the reaction RNA(n) + a ribonucleoside 5'-triphosphate = RNA(n+1) + diphosphate. Promotes RNA polymerase assembly. Latches the N- and C-terminal regions of the beta' subunit thereby facilitating its interaction with the beta and alpha subunits. This chain is DNA-directed RNA polymerase subunit omega, found in Exiguobacterium sibiricum (strain DSM 17290 / CCUG 55495 / CIP 109462 / JCM 13490 / 255-15).